Reading from the N-terminus, the 351-residue chain is Neutral protease 2 homolog MGG_10927 (351 aa).

The signal sequence occupies residues 1-16; sequence MKFSIGVSLLATLAGA. A propeptide spanning residues 17-177 is cleaved from the precursor; it reads VNVDMAKRDT…AAFLAKRTIV (161 aa). 2 cysteine pairs are disulfide-bonded: cysteine 181/cysteine 253 and cysteine 260/cysteine 278. Residue histidine 303 coordinates Zn(2+). Residue glutamate 304 is part of the active site. Histidine 307 serves as a coordination point for Zn(2+).

The protein belongs to the peptidase M35 family. It depends on Zn(2+) as a cofactor.

The protein resides in the secreted. The enzyme catalyses Preferential cleavage of bonds with hydrophobic residues in P1'. Also 3-Asn-|-Gln-4 and 8-Gly-|-Ser-9 bonds in insulin B chain.. Functionally, secreted metalloproteinase that allows assimilation of proteinaceous substrates. Shows high activities on basic nuclear substrates such as histone and protamine. In Colletotrichum graminicola (strain M1.001 / M2 / FGSC 10212) (Maize anthracnose fungus), this protein is Neutral protease 2 homolog MGG_10927.